The sequence spans 228 residues: Large ribosomal subunit protein uL23m (228 aa).

The segment at 194-228 is disordered; sequence PEEEGWSEVEENLPLDESAESAAEESSSKGSETRQ. Over residues 195-216 the composition is skewed to acidic residues; the sequence is EEEGWSEVEENLPLDESAESAA.

The protein belongs to the universal ribosomal protein uL23 family. In terms of assembly, component of the mitochondrial large ribosomal subunit (mt-LSU). Mature N.crassa 74S mitochondrial ribosomes consist of a small (37S) and a large (54S) subunit. The 37S small subunit contains a 16S ribosomal RNA (16S mt-rRNA) and 32 different proteins. The 54S large subunit contains a 23S rRNA (23S mt-rRNA) and 42 different proteins. uL23m forms the wall of the exit tunnel.

The protein resides in the mitochondrion. Functionally, component of the mitochondrial ribosome (mitoribosome), a dedicated translation machinery responsible for the synthesis of mitochondrial genome-encoded proteins, including at least some of the essential transmembrane subunits of the mitochondrial respiratory chain. The mitoribosomes are attached to the mitochondrial inner membrane and translation products are cotranslationally integrated into the membrane. This Neurospora crassa (strain ATCC 24698 / 74-OR23-1A / CBS 708.71 / DSM 1257 / FGSC 987) protein is Large ribosomal subunit protein uL23m (mrp20).